Consider the following 194-residue polypeptide: Putative NAD(P)H nitroreductase YfhC (194 aa).

FMN-binding positions include 20 to 22, 147 to 148, and R188; these read RRS and KI.

This sequence belongs to the nitroreductase family. Requires FMN as cofactor.

The chain is Putative NAD(P)H nitroreductase YfhC (yfhC) from Bacillus subtilis (strain 168).